A 312-amino-acid chain; its full sequence is Methionyl-tRNA formyltransferase (312 aa).

Residue 109–112 (SLLP) coordinates (6S)-5,6,7,8-tetrahydrofolate.

Belongs to the Fmt family.

It catalyses the reaction L-methionyl-tRNA(fMet) + (6R)-10-formyltetrahydrofolate = N-formyl-L-methionyl-tRNA(fMet) + (6S)-5,6,7,8-tetrahydrofolate + H(+). Functionally, attaches a formyl group to the free amino group of methionyl-tRNA(fMet). The formyl group appears to play a dual role in the initiator identity of N-formylmethionyl-tRNA by promoting its recognition by IF2 and preventing the misappropriation of this tRNA by the elongation apparatus. The chain is Methionyl-tRNA formyltransferase from Geotalea daltonii (strain DSM 22248 / JCM 15807 / FRC-32) (Geobacter daltonii).